The chain runs to 176 residues: Cytochrome b (176 aa).

Transmembrane regions (helical) follow at residues 33–53 (FGSL…FLAM), 77–98 (WVLR…YLHV), and 113–133 (WNMG…GYVL). Heme b contacts are provided by His83 and His97.

It belongs to the cytochrome b family. In terms of assembly, the cytochrome bc1 complex contains 11 subunits: 3 respiratory subunits (MT-CYB, CYC1 and UQCRFS1), 2 core proteins (UQCRC1 and UQCRC2) and 6 low-molecular weight proteins (UQCRH/QCR6, UQCRB/QCR7, UQCRQ/QCR8, UQCR10/QCR9, UQCR11/QCR10 and a cleavage product of UQCRFS1). This cytochrome bc1 complex then forms a dimer. Heme b serves as cofactor.

Its subcellular location is the mitochondrion inner membrane. Its function is as follows. Component of the ubiquinol-cytochrome c reductase complex (complex III or cytochrome b-c1 complex) that is part of the mitochondrial respiratory chain. The b-c1 complex mediates electron transfer from ubiquinol to cytochrome c. Contributes to the generation of a proton gradient across the mitochondrial membrane that is then used for ATP synthesis. The sequence is that of Cytochrome b (MT-CYB) from Lasionycteris noctivagans (Silver-haired bat).